The following is a 333-amino-acid chain: Probable HTH-type transcriptional repressor ExuR (333 aa).

An HTH lacI-type domain is found at 2–56 (VTIKDIAKLANVSHTTVSRALNNSPYIKEHTKKKILELAEQLNYTPNVNAKSLAM). Residues 4 to 23 (IKDIAKLANVSHTTVSRALN) constitute a DNA-binding region (H-T-H motif).

Transcriptional repressor for the exu locus which is required for galacturonate utilization. The chain is Probable HTH-type transcriptional repressor ExuR (exuR) from Bacillus subtilis (strain 168).